Reading from the N-terminus, the 805-residue chain is Chloride channel protein (805 aa).

The Cytoplasmic segment spans residues 1-48; it reads MSHEKNEASGYPEAQSWKSQEAMLGARTEVSRWRAVKNCLYRHLVKVL. Helical transmembrane passes span 49 to 86 and 93 to 116; these read GEDW…LFAL and LQYL…CQIV. The Selectivity filter part_1 signature appears at 122–126; it reads GSGIP. Ser-123 contacts chloride. An intramembrane region (helical) is located at residues 125 to 132; that stretch reads IPELKTII. 2 consecutive transmembrane segments (helical) span residues 141–159 and 166–184; these read LTLR…ALSA and EGPF…NQLL. The Selectivity filter part_2 signature appears at 164–168; the sequence is GKEGP. 2 intramembrane regions (helical) span residues 201-213 and 217-225; these read ILTV…ISCC and PLAGVLFSI. Helical transmembrane passes span 237–256, 283–311, and 320–339; these read YWRG…VLSV, MPAF…IVFM, and ILKK…LATL. Asn-365 carries N-linked (GlcNAc...) asparagine glycosylation. 2 helical membrane-spanning segments follow: residues 388–408 and 416–439; these read LNIF…AALA and GAFV…MALL. Positions 416-420 match the Selectivity filter part_3 motif; sequence GAFVP. Residue Phe-418 coordinates chloride. The segment at residues 456–470 is an intramembrane region (helical); the sequence is GEYAVIGAAAMTGAV. The segment at residues 471 to 472 is an intramembrane region (note=Loop between two helices); sequence TH. An intramembrane region (helical) is located at residues 473-484; it reads AVSTAVICFELT. Residues 485 to 489 constitute an intramembrane region (note=Loop between two helices); sequence GQISH. The chain crosses the membrane as a helical span at residues 490–507; sequence VLPMMVAVILANMVAQGL. The Cytoplasmic portion of the chain corresponds to 508-805; the sequence is QPSLYDSIIQ…RTATSNSSGK (298 aa). Tyr-512 contacts chloride. Residues 543–601 form the CBS 1 domain; sequence MVRDVTSIASTSTYGDLLHVLRQTKLKFFPFVDTPDTNTLLGSIDRTEVEGLLQRRISA. Disordered regions lie at residues 606 to 625 and 653 to 684; these read PAAA…GASF and KVQT…QKGT. In terms of domain architecture, CBS 2 spans 719–776; the sequence is IDQSPFQLVEGTSLQKTHTLFSLLGLDRAYVTSMGKLVGVVALAEIQAAIEGSYQKGF.

The protein belongs to the chloride channel (TC 2.A.49) family. ClC-0 subfamily. In terms of assembly, homodimer. Each subunit contains a channel ('Double barreled channel').

Its subcellular location is the membrane. Voltage-gated chloride channel. This channel is thought to ensure the high conductance of the non-innervated membrane of the electrocyte necessary for efficient current generation caused by sodium influx through the acetylcholine receptor at the innervated membrane. The sequence is that of Chloride channel protein from Torpedo marmorata (Marbled electric ray).